The chain runs to 212 residues: Thymidylate kinase (212 aa).

At Ala2 the chain carries N-acetylalanine. ATP-binding positions include 16 to 21 (RAGKTT) and Arg97. Positions 133-157 (LQLQLLDAAARGEFGLERYETGTFQ) are LID. ATP is bound by residues Lys182 and Arg192.

It belongs to the thymidylate kinase family. In terms of assembly, homodimer. The cofactor is Mg(2+).

It catalyses the reaction dTMP + ATP = dTDP + ADP. The protein operates within pyrimidine metabolism; dTTP biosynthesis. In terms of biological role, catalyzes the phosphorylation of thymidine monophosphate (dTMP) to thymidine diphosphate (dTDP), the immediate precursor for the DNA building block dTTP, with ATP as the preferred phosphoryl donor in the presence of Mg(2+). The polypeptide is Thymidylate kinase (Dtymk) (Mus musculus (Mouse)).